The sequence spans 544 residues: Apolipoprotein N-acyltransferase 1 (544 aa).

Transmembrane regions (helical) follow at residues 30–50 (LNLN…FLLL), 57–79 (FSFL…WIIF), 91–111 (KYCI…SYFS), 115–135 (FIFQ…GFLG), 157–177 (IFGV…SASF), and 197–217 (PMMI…FTKI). The 277-residue stretch at 225–501 (ARIALVQPNR…KDILVADVTV (277 aa)) folds into the CN hydrolase domain. Residue Glu272 is the Proton acceptor of the active site. Lys360 is an active-site residue. The Nucleophile role is filled by Cys412. The helical transmembrane segment at 514–534 (GDFFGVLCTIVLILNLCFIII) threads the bilayer.

The protein belongs to the CN hydrolase family. Apolipoprotein N-acyltransferase subfamily.

Its subcellular location is the cell inner membrane. It catalyses the reaction N-terminal S-1,2-diacyl-sn-glyceryl-L-cysteinyl-[lipoprotein] + a glycerophospholipid = N-acyl-S-1,2-diacyl-sn-glyceryl-L-cysteinyl-[lipoprotein] + a 2-acyl-sn-glycero-3-phospholipid + H(+). The protein operates within protein modification; lipoprotein biosynthesis (N-acyl transfer). Its function is as follows. Catalyzes the phospholipid dependent N-acylation of the N-terminal cysteine of apolipoprotein, the last step in lipoprotein maturation. The chain is Apolipoprotein N-acyltransferase 1 from Treponema denticola (strain ATCC 35405 / DSM 14222 / CIP 103919 / JCM 8153 / KCTC 15104).